Reading from the N-terminus, the 1189-residue chain is Disabled homolog 2-interacting protein (1189 aa).

Residues 1 to 75 (MSAGGNARKS…EPSASTPFRV (75 aa)) form a disordered region. The span at 20-38 (LLRRPRLQRQRSRSRSRTR) shows a compositional bias: basic residues. A compositionally biased stretch (basic and acidic residues) spans 39-49 (PARESPQERPG). Residues 59–73 (SEKNPSMEPSASTPF) are compositionally biased toward polar residues. One can recognise a PH domain in the interval 101 to 202 (SFRHILPGFR…WMENLRRAVH (102 aa)). Residues 193–311 (WMENLRRAVH…AGRQFVEKWY (119 aa)) form the C2 domain. The Ras-GAP domain occupies 387–595 (GKVKDFLTDL…TNMQRFLLEI (209 aa)). The interval 646 to 943 (LRDVHTALST…RTPPTLLSTL (298 aa)) is necessary for interaction with AKT1. A compositionally biased stretch (polar residues) spans 653–668 (LSTPGSGQLPGTNDLA). Disordered stretches follow at residues 653–679 (LSTP…SSVS) and 715–738 (RSSG…PDLQ). Residues 669–679 (STPGSGSSSVS) are compositionally biased toward low complexity. Polar residues predominate over residues 715 to 731 (RSSGVQPSPARSSSYSE). Residue Ser-728 is modified to Phosphoserine; by MAP3K5 and RIPK1. At Ser-747 the chain carries Phosphoserine. 5 disordered regions span residues 804 to 823 (VPTP…PQLL), 843 to 865 (PRGL…NSEE), 895 to 998 (SLTE…SPNA), 1015 to 1034 (EDEG…SKEE), and 1163 to 1189 (ARNG…SSNC). A compositionally biased stretch (low complexity) spans 852-865 (EGHSSLSSHSNSEE). A compositionally biased stretch (pro residues) spans 919–931 (QPPPPPPPPPPAP). Composition is skewed to polar residues over residues 939–955 (LLST…TLAS) and 967–976 (LRQQSSSSKG). Phosphoserine occurs at positions 978 and 995. Over residues 1023–1034 (PPHRDRLRSKEE) the composition is skewed to basic and acidic residues. The stretch at 1025–1159 (HRDRLRSKEE…SALTQLKERY (135 aa)) forms a coiled coil.

In terms of assembly, on plasma membrane, exists in an inactive form complexed with TNFR1; in response to TNF-alpha, dissociates from TNFR1 complex, translocates to cytoplasm and forms part of an intracellular signaling complex comprising TRADD, RIPK1, TRAF2 and MAP3K5. Interacts with DAB1. Part of a cytoplasmic complex made of HIPK1, DAB2IP and MAP3K5 in response to TNF-alpha; this complex formation promotes MAP3K5-JNK activation and subsequent apoptosis. Interacts (via N-terminal domain) with JAK2; the interaction occurs in a IFNG/IFN-gamma-dependent manner and inhibits JAK2 autophosphorylation activity. Interacts (via C2 domain) with GSK3B; the interaction stimulates GSK3B kinase activation. Interacts (via C2 domain) with PPP2CA. Interacts (via proline-rich motif) with a regulatory p85 subunit (via SH3 domain) of the PI3K complex; the interaction inhibits the PI3K-AKT complex activity in a TNF-alpha-dependent manner in prostate cancer (PCa) cells. Interacts with AKT1; the interaction is increased in a TNF-alpha-induced manner. Interacts (via C2 domain and active form preferentially) with KDR/VEGFR2 (tyrosine-phosphorylated active form preferentially); the interaction occurs at the late phase of VEGFA response and inhibits KDR/VEGFR2 activity. Interacts (via N-terminus C2 domain) with MAP3K5 ('Ser-966' dephosphorylated form preferentially); the interaction occurs in a TNF-alpha-induced manner. Interacts (via Ras-GAP domain) with the catalytic subunit of protein phosphatase PP2A; the interaction occurs in resting endothelial cells, is further enhanced by TNF-alpha stimulation and is required to bridge PP2A to MAP3K5. Interacts (via C-terminus PER domain) with TRAF2 (via zinc fingers); the interaction occurs in a TNF-alpha-dependent manner. Interacts with 14-3-3 proteins; the interaction occurs in a TNF-alpha-dependent manner. Interacts (via Ras-GAP domain) with RIPK1 (via kinase domain); the interaction occurs in a TNF-alpha-dependent manner. Interacts (via PH domain) with ERN1. Interacts with TRAF2. Interacts (via NPXY motif) with DAB2 (via PID domain). Interacts with RAB40C; acts as a GAP for RAB40C. In terms of processing, in response to TNF-alpha-induction, phosphorylated at Ser-728; phosphorylation leads to a conformational change, and thus, increases its association with 14-3-3 proteins, MAP3K5, RIPK1 and TRAF2 in endothelial cells; also stimulates regulatory p85 subunit sequestring and PI3K-p85 complex activity inhibition. In terms of tissue distribution, expressed in vascular endothelium of muscle and aorta, in smooth muscle cells of aorta and epithelial cells of lung. Expressed throughout the brain, including olfactory bulb, hypothalamus, cerebellum and cerebral cortex. Expressed in the soma and processes of neurons in a variety of brain structures, including the developing cerebral cortex, CA1 pyramidal neurons and Purkinje cells. Poorly expressed in medulloblastoma cells compared to cerebellar precursor proliferating progenitor cells (at protein level). Highly expressed in the brain, salivary gland, and testis; moderate expression in kidney and heart. Low expression in the lung, seminal vesicle, ventral prostate, epididymis, liver, and bladder. Very low expression in the coagulation gland and skeleton muscles. Lowest expression seen in spleen.

Its subcellular location is the cytoplasm. The protein localises to the cell membrane. It localises to the membrane. It is found in the cell projection. The protein resides in the dendrite. In terms of biological role, functions as a scaffold protein implicated in the regulation of a large spectrum of both general and specialized signaling pathways. Involved in several processes such as innate immune response, inflammation and cell growth inhibition, apoptosis, cell survival, angiogenesis, cell migration and maturation. Also plays a role in cell cycle checkpoint control; reduces G1 phase cyclin levels resulting in G0/G1 cell cycle arrest. Mediates signal transduction by receptor-mediated inflammatory signals, such as the tumor necrosis factor (TNF), interferon (IFN) or lipopolysaccharide (LPS). Modulates the balance between phosphatidylinositol 3-kinase (PI3K)-AKT-mediated cell survival and apoptosis stimulated kinase (MAP3K5)-JNK signaling pathways; sequesters both AKT1 and MAP3K5 and counterbalances the activity of each kinase by modulating their phosphorylation status in response to pro-inflammatory stimuli. Acts as a regulator of the endoplasmic reticulum (ER) unfolded protein response (UPR) pathway; specifically involved in transduction of the ER stress-response to the JNK cascade through ERN1. Mediates TNF-alpha-induced apoptosis activation by facilitating dissociation of inhibitor 14-3-3 from MAP3K5; recruits the PP2A phosphatase complex which dephosphorylates MAP3K5 on 'Ser-966', leading to the dissociation of 13-3-3 proteins and activation of the MAP3K5-JNK signaling pathway in endothelial cells. Also mediates TNF/TRAF2-induced MAP3K5-JNK activation, while it inhibits CHUK-NF-kappa-B signaling. Acts a negative regulator in the IFN-gamma-mediated JAK-STAT signaling cascade by inhibiting smooth muscle cell (VSMCs) proliferation and intimal expansion, and thus, prevents graft arteriosclerosis (GA). Acts as a GTPase-activating protein (GAP) for the ADP ribosylation factor 6 (ARF6) and Ras. Promotes hydrolysis of the ARF6-bound GTP and thus, negatively regulates phosphatidylinositol 4,5-bisphosphate (PIP2)-dependent TLR4-TIRAP-MyD88 and NF-kappa-B signaling pathways in endothelial cells in response to lipopolysaccharides (LPS). Binds specifically to phosphatidylinositol 4-phosphate (PtdIns4P) and phosphatidylinositol 3-phosphate (PtdIns3P). In response to vascular endothelial growth factor (VEGFA), acts as a negative regulator of the VEGFR2-PI3K-mediated angiogenic signaling pathway by inhibiting endothelial cell migration and tube formation. In the developing brain, promotes both the transition from the multipolar to the bipolar stage and the radial migration of cortical neurons from the ventricular zone toward the superficial layer of the neocortex in a glial-dependent locomotion process. Probable downstream effector of the Reelin signaling pathway; promotes Purkinje cell (PC) dendrites development and formation of cerebellar synapses. Also functions as a tumor suppressor protein in prostate cancer progression; prevents cell proliferation and epithelial-to-mesenchymal transition (EMT) through activation of the glycogen synthase kinase-3 beta (GSK3B)-induced beta-catenin and inhibition of PI3K-AKT and Ras-MAPK survival downstream signaling cascades, respectively. The chain is Disabled homolog 2-interacting protein (Dab2ip) from Mus musculus (Mouse).